Consider the following 307-residue polypeptide: Taste receptor type 2 member 41 (307 aa).

The Extracellular portion of the chain corresponds to 1–7 (MQAALMA). The helical transmembrane segment at 8–28 (FFMLLFSLLSLLGIAANGFIV) threads the bilayer. Residues 29–40 (LVLGREWLRYGR) lie on the Cytoplasmic side of the membrane. A helical transmembrane segment spans residues 41-61 (LLPLDMILISLGASRXCLQLV). Topologically, residues 62–88 (GTVHNFYYSARKVEYSGGLGRQFFHLH) are extracellular. A helical transmembrane segment spans residues 89–109 (WHFLNSATFWFCSWLSVLFCV). At 110–129 (KIANITHPTFLWLKWRFPGW) the chain is on the cytoplasmic side. Residues 130–150 (VPWLLLGSVLISFIITLLFFW) form a helical membrane-spanning segment. The Extracellular segment spans residues 151 to 183 (VNYPVYQELLIRKFSGNMTYKWNTRIETYYFPS). Asn-167 carries an N-linked (GlcNAc...) asparagine glycan. A helical transmembrane segment spans residues 184-204 (LKLVIWSIPFSVFLVSIMLLI). Residues 205–234 (NSLRRHTQRMQHNGHSLQDPSTQAHTRALK) are Cytoplasmic-facing. Residues 235 to 255 (SLISFLFLYALSFLSLIIDAT) traverse the membrane as a helical segment. The Extracellular segment spans residues 256 to 264 (KFISMQNDF). The helical transmembrane segment at 265-285 (YWPWQIAVYLCISVHPFILIF) threads the bilayer. Residues 286 to 307 (SNLKLRSMFWQVLLLARGFWVA) are Cytoplasmic-facing.

This sequence belongs to the G-protein coupled receptor T2R family.

It is found in the membrane. Receptor that may play a role in the perception of bitterness and is gustducin-linked. May play a role in sensing the chemical composition of the gastrointestinal content. The activity of this receptor may stimulate alpha gustducin, mediate PLC-beta-2 activation and lead to the gating of TRPM5. The sequence is that of Taste receptor type 2 member 41 (TAS2R41) from Gorilla gorilla gorilla (Western lowland gorilla).